The following is a 1662-amino-acid chain: Cortactin-binding protein 2 (1662 aa).

Disordered regions lie at residues Met1–Ala23, Lys202–Thr235, Ile365–Gly439, and Gly453–Ser477. Positions Arg118–Lys275 form a coiled coil. Positions Pro385–Ser395 are enriched in low complexity. Residues Ala404–Ala421 show a composition bias toward polar residues. Arg497 carries the asymmetric dimethylarginine modification. The tract at residues Phe498–Ser615 is disordered. Composition is skewed to polar residues over residues Asp516–Lys529 and Thr582–Gln592. ANK repeat units follow at residues Gly708–Tyr738, Asp742–Ala771, Asn775–His804, Gly808–Val837, and Asp841–Gly870. Residues Asn871 to Lys897 form a disordered region. Positions Ser874–Ser891 are enriched in acidic residues. The stretch at Glu911–Arg941 is one ANK 6 repeat. The segment at Lys1446 to Trp1473 is disordered. Phosphoserine is present on Ser1523. The tract at residues Val1614–Lys1662 is disordered. Positions Ser1623 to Gln1637 are enriched in low complexity. The segment covering Ser1644–Lys1662 has biased composition (basic and acidic residues).

In terms of assembly, interacts with CTTN/cortactin SH3 domain. Interacts with STRN, STRN4/zinedin and MOB4/phocein; this interactions mediate the association with the STRIPAK core complex and may regulate dendritic spine distribution of the STRIPAK complex in hippocampal neurons. Activation of glutamate receptors weakens the interaction with STRN and STRN4.

The protein resides in the cytoplasm. The protein localises to the cell cortex. It localises to the cell projection. It is found in the dendritic spine. Its function is as follows. Regulates the dendritic spine distribution of CTTN/cortactin in hippocampal neurons, and thus controls dendritic spinogenesis and dendritic spine maintenance. Associates with the striatin-interacting phosphatase and kinase (STRIPAK) core complex to regulate dendritic spine distribution of the STRIPAK complex in hippocampal neurons. The chain is Cortactin-binding protein 2 (CTTNBP2) from Callithrix jacchus (White-tufted-ear marmoset).